The chain runs to 141 residues: Nucleoside diphosphate kinase (141 aa).

ATP contacts are provided by Lys-11, Phe-59, Arg-87, Thr-93, Arg-104, and Asn-114. The active-site Pros-phosphohistidine intermediate is the His-117.

The protein belongs to the NDK family. Homotetramer. Mg(2+) serves as cofactor.

It is found in the cytoplasm. It carries out the reaction a 2'-deoxyribonucleoside 5'-diphosphate + ATP = a 2'-deoxyribonucleoside 5'-triphosphate + ADP. The catalysed reaction is a ribonucleoside 5'-diphosphate + ATP = a ribonucleoside 5'-triphosphate + ADP. In terms of biological role, major role in the synthesis of nucleoside triphosphates other than ATP. The ATP gamma phosphate is transferred to the NDP beta phosphate via a ping-pong mechanism, using a phosphorylated active-site intermediate. The polypeptide is Nucleoside diphosphate kinase (Xylella fastidiosa (strain 9a5c)).